The chain runs to 466 residues: Protein hob1 (466 aa).

In terms of domain architecture, BAR spans 17–269; the sequence is LRSKFNVGEI…RGDVKDRAEA (253 aa). Coiled coils occupy residues 31-67 and 177-204; these read IYED…LNHQ and EKKL…LKEE. Residues 280 to 342 are disordered; the sequence is PTYKRPGMGP…ASDYSTPSAG (63 aa). Residues 294–303 show a composition bias toward low complexity; sequence ATASSSSSFS. Phosphoserine is present on residues serine 298, serine 299, serine 301, and serine 303. Residues 407-466 form the SH3 domain; sequence PAAEHVVALYDYAAQAAGDLSFHAGDRIEVVSRTDNQNEWWIGRLNGAQGQFPGNYVQLE.

Functionally, has a role in DNA damage signaling as a part of stress response processes. This Schizosaccharomyces pombe (strain 972 / ATCC 24843) (Fission yeast) protein is Protein hob1 (hob1).